The following is a 133-amino-acid chain: Small ribosomal subunit protein uS8 (133 aa).

This sequence belongs to the universal ribosomal protein uS8 family. Part of the 30S ribosomal subunit. Contacts proteins S5 and S12.

One of the primary rRNA binding proteins, it binds directly to 16S rRNA central domain where it helps coordinate assembly of the platform of the 30S subunit. This is Small ribosomal subunit protein uS8 from Rhodopirellula baltica (strain DSM 10527 / NCIMB 13988 / SH1).